We begin with the raw amino-acid sequence, 451 residues long: UDP-glycosyltransferase 13 (451 aa).

The Proton acceptor role is filled by H15. H15 contributes to the an anthocyanidin binding site. D93 functions as the Charge relay in the catalytic mechanism. Positions 326, 328, 343, 346, 347, 348, and 351 each coordinate UDP-alpha-D-glucose. A366 serves as a coordination point for an anthocyanidin. 2 residues coordinate UDP-alpha-D-glucose: E367 and Q368.

Belongs to the UDP-glycosyltransferase family. In terms of tissue distribution, expressed in roots. Detected in stems and leaves.

It catalyses the reaction a 7-hydroxyisoflavone + UDP-alpha-D-glucose = a 7-hydroxyisoflavone 7-O-beta-D-glucoside + UDP + H(+). Functionally, isoflavone 7-O-glucosyltransferase converting daidzein to daidzin, genistein to genistin and formononetin to ononin. Shows some activity toward the flavanones liquiritigenin and naringenin, but not toward cyanidin, isoliquiritigenin, apigenin, luteolin, kaempferol, quercetin, daidzin and puerarin. This Pueraria montana var. lobata (Kudzu vine) protein is UDP-glycosyltransferase 13.